The primary structure comprises 190 residues: Peptidyl-tRNA hydrolase (190 aa).

Residue tyrosine 18 participates in tRNA binding. The Proton acceptor role is filled by histidine 23. 3 residues coordinate tRNA: phenylalanine 67, asparagine 69, and asparagine 115.

It belongs to the PTH family. In terms of assembly, monomer.

It localises to the cytoplasm. It carries out the reaction an N-acyl-L-alpha-aminoacyl-tRNA + H2O = an N-acyl-L-amino acid + a tRNA + H(+). Its function is as follows. Hydrolyzes ribosome-free peptidyl-tRNAs (with 1 or more amino acids incorporated), which drop off the ribosome during protein synthesis, or as a result of ribosome stalling. Catalyzes the release of premature peptidyl moieties from peptidyl-tRNA molecules trapped in stalled 50S ribosomal subunits, and thus maintains levels of free tRNAs and 50S ribosomes. The chain is Peptidyl-tRNA hydrolase from Leptospira interrogans serogroup Icterohaemorrhagiae serovar Lai (strain 56601).